A 265-amino-acid chain; its full sequence is Putative hydro-lyase PA14_37210 (265 aa).

It belongs to the D-glutamate cyclase family.

This Pseudomonas aeruginosa (strain UCBPP-PA14) protein is Putative hydro-lyase PA14_37210.